Here is a 708-residue protein sequence, read N- to C-terminus: Protein MICRORCHIDIA 5 (708 aa).

The span at 1-11 (MAESGSTNPKS) shows a compositional bias: polar residues. A disordered region spans residues 1-47 (MAESGSTNPKSPSVVPDSTLGGLKRDLRNYHDGDDSNNLSIKKSKTT). Residues 23–34 (LKRDLRNYHDGD) show a composition bias toward basic and acidic residues. Positions 590–665 (SVNLEAELQK…LENRQEGVST (76 aa)) form a coiled coil. Positions 672-679 (ARRDVTED) match the Nuclear localization signal motif.

It belongs to the MORC ATPase protein family. As to quaternary structure, homodimer and heterodimer. Component of an RNA-directed DNA methylation (RdDM) complex. The cofactor is Mg(2+). It depends on Mn(2+) as a cofactor.

It localises to the nucleus. Exhibits ATPase activity. Binds DNA/RNA in a non-specific manner and exhibits endonuclease activity. Probably involved in DNA repair. Involved in RNA-directed DNA methylation (RdDM) as a component of the RdDM machinery and required for gene silencing. May also be involved in the regulation of chromatin architecture to maintain gene silencing. This chain is Protein MICRORCHIDIA 5, found in Arabidopsis thaliana (Mouse-ear cress).